A 367-amino-acid polypeptide reads, in one-letter code: tRNA/tmRNA (uracil-C(5))-methyltransferase (367 aa).

Residues glutamine 190, tyrosine 218, asparagine 223, glutamate 239, and aspartate 299 each coordinate S-adenosyl-L-methionine. The active-site Nucleophile is the cysteine 324. Glutamate 358 functions as the Proton acceptor in the catalytic mechanism.

This sequence belongs to the class I-like SAM-binding methyltransferase superfamily. RNA M5U methyltransferase family. TrmA subfamily.

The enzyme catalyses uridine(54) in tRNA + S-adenosyl-L-methionine = 5-methyluridine(54) in tRNA + S-adenosyl-L-homocysteine + H(+). It carries out the reaction uridine(341) in tmRNA + S-adenosyl-L-methionine = 5-methyluridine(341) in tmRNA + S-adenosyl-L-homocysteine + H(+). Its function is as follows. Dual-specificity methyltransferase that catalyzes the formation of 5-methyluridine at position 54 (m5U54) in all tRNAs, and that of position 341 (m5U341) in tmRNA (transfer-mRNA). This Dickeya chrysanthemi (strain Ech1591) (Dickeya zeae (strain Ech1591)) protein is tRNA/tmRNA (uracil-C(5))-methyltransferase.